A 567-amino-acid polypeptide reads, in one-letter code: Signal transducer and activator of transcription b (567 aa).

The region spanning 449–548 (WYDGLVYGFC…LGGRNKPRIR (100 aa)) is the SH2 domain.

The protein belongs to the transcription factor STAT family. May interact with sodium-dependent transporter snf-12; the interaction is probably direct.

The protein localises to the cytoplasm. It localises to the nucleus. The protein resides in the vesicle. Functionally, carries out a dual function: signal transduction and activation of transcription. Required, in concert with transcription factor elt-3, for up-regulation of the vacuolar H(+)-ATPase and acceleration of lysosome maturation at molt. As part of the innate immune response to molting and injury of the adult epidermis, positively regulates the expression of epidermal antimicrobial peptides, such as nlp-29. Through positively modulating the expression of epidermal antimicrobial peptides, such as nlp-29, plays a role in resistance to fungal infection and in the response to physical wounding and phorbol ester PMA treatment. Functions cell autonomously in the epidermis, in concert with sodium-dependent transporter snf-12, probably acting at vesicular membranes, downstream of a p38 MAPK/pmk-1 pathway. This is Signal transducer and activator of transcription b from Caenorhabditis elegans.